The chain runs to 100 residues: Protein RADIALIS-like 1 (100 aa).

Residues 9–64 enclose the SANT domain; sequence QSSGSWTAKQNKAFEQALATYDQDTPNRWQNVAKVVGGKTTEEVKRHYELLVQDIN. A disordered region spans residues 73–100; it reads FPNYRTSGGCTNGRLSQEEKRMRNMRLQ. Residues 76–87 are compositionally biased toward polar residues; that stretch reads YRTSGGCTNGRL.

Its subcellular location is the nucleus. Functionally, probable transcription factor. The chain is Protein RADIALIS-like 1 (RL1) from Arabidopsis thaliana (Mouse-ear cress).